A 231-amino-acid polypeptide reads, in one-letter code: Orotidine 5'-phosphate decarboxylase (231 aa).

Substrate contacts are provided by residues aspartate 11, lysine 33, 60 to 69 (DLKFHDIPNT), threonine 120, arginine 181, glutamine 190, glycine 210, and arginine 211. Lysine 62 (proton donor) is an active-site residue.

Belongs to the OMP decarboxylase family. Type 1 subfamily. Homodimer.

The enzyme catalyses orotidine 5'-phosphate + H(+) = UMP + CO2. It participates in pyrimidine metabolism; UMP biosynthesis via de novo pathway; UMP from orotate: step 2/2. Its function is as follows. Catalyzes the decarboxylation of orotidine 5'-monophosphate (OMP) to uridine 5'-monophosphate (UMP). The sequence is that of Orotidine 5'-phosphate decarboxylase from Photobacterium profundum (strain SS9).